The following is a 1010-amino-acid chain: MSQLRLLLFRLGPQARKLLATRDIAAFGGRRRSSGPPTTIPRSRGGVSPSYVEEMYFAWLENPQSVHKSWDNFFQRATKEASVGPAQPQPPAVIQESRASVSSCTKTSKLVEDHLAVQSLIRAYQIRGHHVAQLDPLGILDADLDSFVPSDLITTIDKLAFYDLQEADLDKEFRLPTTTFIGGSENTLSLREIIRRLESTYCQHIGLEFMFINDVEQCQWIRQKFETPGVMKFSIEEKRTLLARLVRSMRFEDFLARKWSSEKRFGLEGCEVMIPALKTIIDKSSEMGVENVILGMPHRGRLNVLANVIRKDLEQIFCQFDPKLEAADEGSGDVKYHLGMYHERINRVTNRNITLSLVANPSHLEAVDPVVQGKTKAEQFYRGDAQGRKVMSILVHGDAAFAGQGVVYETFHLSDLPSYTTNGTVHVVVNNQIGFTTDPRMARSSPYPTDVARVVNAPIFHVNADDPEAVIYVCSVAAEWRNTFNKDVVVDLVCYRRRGHNEMDEPMFTQPLMYKQIHKQVPVLKKYADKLIAEGTVTLQEFEEEIAKYDRICEEAYGRSKDKKILHIKHWLDSPWPGFFNVDGEPKSMTYPTTGIPEDTLSHIGNVASSVPLEDFKIHTGLSRILRGRADMTKKRTVDWALAEYMAFGSLLKEGIHVRLSGQDVERGTFSHRHHVLHDQDVDRRTCVPMNHLWPDQAPYTVCNSSLSEYGVLGFELGYAMASPNALVLWEAQFGDFHNTAQCIIDQFISTGQAKWVRHNGIVLLLPHGMEGMGPEHSSARPERFLQMSNDDSDAYPVFTEDFEVSQLYDCNWIVVNCSTPASYFHVLRRQVLLPFRKPLIVFTPKSLLRHPDAKSSFDQMVSGTSFQRMIPEDGPAAQSPERVERLIFCTGKVYYDLVKERSSQGLEKQVAITRLEQISPFPFDLIMREAEKYSGAELVWCQEEHKNMGYYDYISPRFMTLLGHSRPIWYVGREPAAAPATGNKNTHLVSLRKFLDTAFNLKAFEGKTF.

Residues 1 to 107 (MSQLRLLLFR…RASVSSCTKT (107 aa)) constitute a mitochondrion transit peptide. The interval 28–47 (GGRRRSSGPPTTIPRSRGGV) is disordered. The Ca(2+) site is built by His130, Asp143, and Asp145. Thiamine diphosphate-binding residues include Arg299, Asp398, Asn431, Ile433, and Gln663. Mg(2+) contacts are provided by Asp398, Asn431, and Ile433.

The protein belongs to the alpha-ketoglutarate dehydrogenase family. In terms of assembly, the OGDHC complex comprises multiple copies of three catalytic enzyme components, the 2-oxoglutarate dehydrogenase (OGDH/E1), the dihydrolipoamide dehydrogenase (DLST/E2) and the dihydrolipoamide dehydrogenase (DLD/E3). OGDHL/E1-like isoenzyme may replace OGDH in the OGDHC complex in the brain. The presence of either ODGH/E1 or ODGHL/E1-like isoenzyme in the complex may depend on its tissular distribution. The cofactor is thiamine diphosphate. Mg(2+) is required as a cofactor. In terms of tissue distribution, the OGDHL-containing OGDHC complex is present in the brain, but not in the heart.

It is found in the mitochondrion matrix. It carries out the reaction N(6)-[(R)-lipoyl]-L-lysyl-[protein] + 2-oxoglutarate + H(+) = N(6)-[(R)-S(8)-succinyldihydrolipoyl]-L-lysyl-[protein] + CO2. In terms of biological role, 2-oxoglutarate dehydrogenase (E1-like) component of the 2-oxoglutarate dehydrogenase multienzyme complex (OGDHC) which mediates the decarboxylation of alpha-ketoglutarate in the tricarboxylic acid cycle. The OGDHC complex catalyzes the overall conversion of 2-oxoglutarate to succinyl-CoA and CO(2) while reducing NAD(+) to NADH. The OGDHC complex is mainly active in the mitochondrion. Involved in the inhibition of cell proliferation and in apoptosis. This is 2-oxoglutarate dehydrogenase-like, mitochondrial from Rattus norvegicus (Rat).